The primary structure comprises 449 residues: Trigger factor (449 aa).

One can recognise a PPIase FKBP-type domain in the interval glycine 173–proline 258.

The protein belongs to the FKBP-type PPIase family. Tig subfamily.

Its subcellular location is the cytoplasm. The catalysed reaction is [protein]-peptidylproline (omega=180) = [protein]-peptidylproline (omega=0). Involved in protein export. Acts as a chaperone by maintaining the newly synthesized protein in an open conformation. Functions as a peptidyl-prolyl cis-trans isomerase. This Burkholderia pseudomallei (strain 1710b) protein is Trigger factor.